The primary structure comprises 159 residues: MSSDDQHIREIRVHPIENGTVIDHINAGQALNVLKILNIPTSSSRVVSVLINAPSVHGRKDVVKIEGRELNVEEVDKIALIAPNATINIIRDFEVSDKDIVHIHSQIEGVVRCINPNCISNSNEPVTSKFAVSSNGQRTILRCSYCERIISDDIGEHLL.

The Zn(2+) site is built by Cys-113, Cys-118, Cys-143, and Cys-146.

Belongs to the PyrI family. Contains catalytic and regulatory chains. Zn(2+) is required as a cofactor.

Involved in allosteric regulation of aspartate carbamoyltransferase. This is Aspartate carbamoyltransferase regulatory chain from Methanococcoides burtonii (strain DSM 6242 / NBRC 107633 / OCM 468 / ACE-M).